The primary structure comprises 446 residues: Glucose transporter GlcP (446 aa).

At 1-6 (MKANKY) the chain is on the cytoplasmic side. The helical transmembrane segment at 7–31 (LIFILGALGGLLYGYDNGVISGALL) threads the bilayer. At 32–38 (FIHKDIP) the chain is on the extracellular side. The chain crosses the membrane as a helical span at residues 39–64 (LNSTTEGIVVSSMLIGAIVGAGSSGP). The Cytoplasmic segment spans residues 65-70 (LADKLG). A helical membrane pass occupies residues 71-90 (RRRLVMLIAIVFIIGALILA). Topologically, residues 91 to 94 (ASTN) are extracellular. A helical transmembrane segment spans residues 95–122 (LALLIIGRLIIGLAVGGSMSTVPVYLSE). Over 123–129 (MAPTEYR) the chain is Cytoplasmic. The helical transmembrane segment at 130 to 152 (GSLGSLNQLMITIGILAAYLVNY) threads the bilayer. The Extracellular segment spans residues 153–154 (AF). Residues 155–180 (ADIEGWRWMLGLAVVPSVILLVGIYF) form a helical membrane-spanning segment. Residues 181 to 234 (MPESPRWLLENRNEEAARQVMKITYDDSEIDKELKEMKEINAISESTWTVIKSP) are Cytoplasmic-facing. Residues 235-269 (WLGRILIVGCIFAIFQQFIGINAVIFYSSSIFAKA) form a helical membrane-spanning segment. Residues 270–272 (GLG) lie on the Extracellular side of the membrane. Residues 273 to 295 (EAASILGSVGIGTINVLVTIVAI) traverse the membrane as a helical segment. Residues 296-303 (FVVDKIDR) are Cytoplasmic-facing. The helical transmembrane segment at 304–324 (KKLLVGGNIGMIASLLIMAIL) threads the bilayer. Residues 325-329 (IWTIG) are Extracellular-facing. A helical membrane pass occupies residues 330 to 363 (IASSAWIIIVCLSLFIVFFGISWGPVLWVMLPEL). Over 364-370 (FPMRARG) the chain is Cytoplasmic. The chain crosses the membrane as a helical span at residues 371 to 399 (AATGISALVLNIGTLIVSLFFPILSDALS). The Extracellular portion of the chain corresponds to 400-401 (TE). Residues 402–420 (WVFLIFAFIGVLAMIFVIK) form a helical membrane-spanning segment. Topologically, residues 421–446 (FLPETRGRSLEEIEYELRERTGARTE) are cytoplasmic.

The protein belongs to the major facilitator superfamily. Sugar transporter (TC 2.A.1.1) family.

It localises to the cell membrane. Inhibited by carbonyl cyanide m-chlorophenylhydrazone (CCCP) and by the human glucose transport inhibitors cytochalasin B, phloretin, and forskolin. In terms of biological role, transporter highly specific for glucose uptake. This chain is Glucose transporter GlcP, found in Staphylococcus epidermidis (strain ATCC 12228 / FDA PCI 1200).